The chain runs to 482 residues: 3-isopropylmalate dehydratase large subunit (482 aa).

The [4Fe-4S] cluster site is built by Cys-353, Cys-414, and Cys-417.

It belongs to the aconitase/IPM isomerase family. LeuC type 1 subfamily. In terms of assembly, heterodimer of LeuC and LeuD. It depends on [4Fe-4S] cluster as a cofactor.

It carries out the reaction (2R,3S)-3-isopropylmalate = (2S)-2-isopropylmalate. Its pathway is amino-acid biosynthesis; L-leucine biosynthesis; L-leucine from 3-methyl-2-oxobutanoate: step 2/4. Functionally, catalyzes the isomerization between 2-isopropylmalate and 3-isopropylmalate, via the formation of 2-isopropylmaleate. The protein is 3-isopropylmalate dehydratase large subunit of Xanthomonas oryzae pv. oryzae (strain MAFF 311018).